A 203-amino-acid polypeptide reads, in one-letter code: Thymidylate kinase (203 aa).

10 to 17 (GTEGSGKS) is an ATP binding site.

Belongs to the thymidylate kinase family.

It carries out the reaction dTMP + ATP = dTDP + ADP. Its function is as follows. Phosphorylation of dTMP to form dTDP in both de novo and salvage pathways of dTTP synthesis. This chain is Thymidylate kinase, found in Dichelobacter nodosus (strain VCS1703A).